A 208-amino-acid chain; its full sequence is Large ribosomal subunit protein uL3 (208 aa).

Positions 117 to 147 (FQGVIKRHGQSRGPMAHGSRYHRRPGSMGPV) are disordered.

Belongs to the universal ribosomal protein uL3 family. As to quaternary structure, part of the 50S ribosomal subunit. Forms a cluster with proteins L14 and L19.

Functionally, one of the primary rRNA binding proteins, it binds directly near the 3'-end of the 23S rRNA, where it nucleates assembly of the 50S subunit. The chain is Large ribosomal subunit protein uL3 from Streptococcus equi subsp. zooepidemicus (strain H70).